A 577-amino-acid polypeptide reads, in one-letter code: Nuclear fusion protein tht1 (577 aa).

A signal peptide spans 1 to 29; the sequence is MKFHPTRPFGLYFEFFIIISFFFTSESTG. The Lumenal segment spans residues 30–404; sequence DVESFMKYSN…MNVYFKGLSN (375 aa). N-linked (GlcNAc...) asparagine glycans are attached at residues Asn163 and Asn372. A helical membrane pass occupies residues 405–425; sequence IISSFAFIGFTLFATLSSLFF. Residues 426–433 are Cytoplasmic-facing; sequence KVLKIHRR. Residues 434-454 traverse the membrane as a helical segment; it reads PIIVFGSLSIIFIHIYCFKIT. Residues 455–470 are Lumenal-facing; sequence SWVNLYGWITCTIART. The helical transmembrane segment at 471–491 threads the bilayer; the sequence is LSFIKLNIRTFYLTAFLCALL. Topologically, residues 492–577 are cytoplasmic; that stretch reads NFLRYLKYRN…ESLEQSPWWD (86 aa).

It belongs to the KAR5 family. N-glycosylated.

It localises to the endoplasmic reticulum membrane. It is found in the nucleus membrane. Required for nuclear membrane fusion during karyogamy. This Schizosaccharomyces pombe (strain 972 / ATCC 24843) (Fission yeast) protein is Nuclear fusion protein tht1 (tht1).